The following is a 181-amino-acid chain: Small ribosomal subunit protein uS4 (181 aa).

The S4 RNA-binding domain occupies 106 to 168; it reads RRLQTLVYRK…PTSRIVKAKV (63 aa).

This sequence belongs to the universal ribosomal protein uS4 family. In terms of assembly, part of the 30S ribosomal subunit. Contacts protein S5. The interaction surface between S4 and S5 is involved in control of translational fidelity.

Functionally, one of the primary rRNA binding proteins, it binds directly to 16S rRNA where it nucleates assembly of the body of the 30S subunit. With S5 and S12 plays an important role in translational accuracy. The protein is Small ribosomal subunit protein uS4 of Caldivirga maquilingensis (strain ATCC 700844 / DSM 13496 / JCM 10307 / IC-167).